A 459-amino-acid chain; its full sequence is Alcohol acyl transferase 1 allele GSa (459 aa).

Active-site proton acceptor residues include His-164 and Asn-385.

It belongs to the plant acyltransferase family. As to expression, highly expressed in the cortex and skin of ripe fruit.

It catalyses the reaction butan-1-ol + acetyl-CoA = butyl acetate + CoA. The catalysed reaction is butan-1-ol + butanoyl-CoA = butyl butanoate + CoA. It carries out the reaction butan-1-ol + hexanoyl-CoA = butyl hexanoate + CoA. The enzyme catalyses hexan-1-ol + butanoyl-CoA = hexyl butanoate + CoA. It catalyses the reaction hexan-1-ol + acetyl-CoA = hexyl acetate + CoA. The catalysed reaction is 2-methylbutan-1-ol + butanoyl-CoA = 2-methylbutyl butanoate + CoA. It carries out the reaction ethanol + butanoyl-CoA = ethyl butanoate + CoA. The enzyme catalyses hexanoyl-CoA + ethanol = ethyl hexanoate + CoA. Functionally, involved in the biosynthesis of volatile esters which confer ripe apple fruit flavor. Alcohol acyl transferase that can use a wide range of alcohols as substrate, including 2-methylbutanol, hexanol and ethanol, to produce esters such as butyl butanoate, butyl hexanoate, hexyl butanoate, ethyl butanoate and ethyl hexanoate and, to some extent, 2-methylbutyl acetate (2MBA), butyl acetate, hexyl acetate and 2-methylbutyl butanoate (2MBB). This is Alcohol acyl transferase 1 allele GSa from Malus domestica (Apple).